The sequence spans 106 residues: Large ribosomal subunit protein eL42 (106 aa).

The interval 36 to 56 (FAQGKRRYDRKQSGYGGQTKP) is disordered.

It belongs to the eukaryotic ribosomal protein eL42 family.

The protein is Large ribosomal subunit protein eL42 (RPL44) of Phaffia rhodozyma (Yeast).